A 187-amino-acid chain; its full sequence is 1,6-anhydro-N-acetylmuramyl-L-alanine amidase AmpD (187 aa).

The N-acetylmuramoyl-L-alanine amidase domain maps to 29-167 (TLLVVHNISL…APERKTDPGP (139 aa)). Position 34 (H34) interacts with Zn(2+). E116 functions as the Proton acceptor in the catalytic mechanism. Residues H154 and D164 each contribute to the Zn(2+) site.

This sequence belongs to the N-acetylmuramoyl-L-alanine amidase 2 family. The cofactor is Zn(2+).

The protein resides in the cytoplasm. It catalyses the reaction Hydrolyzes the link between N-acetylmuramoyl residues and L-amino acid residues in certain cell-wall glycopeptides.. In terms of biological role, involved in cell wall peptidoglycan recycling. Specifically cleaves the amide bond between the lactyl group of N-acetylmuramic acid and the alpha-amino group of the L-alanine in degradation products containing an anhydro N-acetylmuramyl moiety. The sequence is that of 1,6-anhydro-N-acetylmuramyl-L-alanine amidase AmpD from Enterobacter cloacae.